Here is a 464-residue protein sequence, read N- to C-terminus: ATP synthase subunit beta (464 aa).

154–161 (GGAGVGKT) is an ATP binding site.

This sequence belongs to the ATPase alpha/beta chains family. In terms of assembly, F-type ATPases have 2 components, CF(1) - the catalytic core - and CF(0) - the membrane proton channel. CF(1) has five subunits: alpha(3), beta(3), gamma(1), delta(1), epsilon(1). CF(0) has three main subunits: a(1), b(2) and c(9-12). The alpha and beta chains form an alternating ring which encloses part of the gamma chain. CF(1) is attached to CF(0) by a central stalk formed by the gamma and epsilon chains, while a peripheral stalk is formed by the delta and b chains.

Its subcellular location is the cell inner membrane. The catalysed reaction is ATP + H2O + 4 H(+)(in) = ADP + phosphate + 5 H(+)(out). In terms of biological role, produces ATP from ADP in the presence of a proton gradient across the membrane. The catalytic sites are hosted primarily by the beta subunits. The protein is ATP synthase subunit beta of Blochmanniella floridana.